Reading from the N-terminus, the 392-residue chain is Sulfate adenylyltransferase (392 aa).

Belongs to the sulfate adenylyltransferase family.

It carries out the reaction sulfate + ATP + H(+) = adenosine 5'-phosphosulfate + diphosphate. It participates in sulfur metabolism; hydrogen sulfide biosynthesis; sulfite from sulfate: step 1/3. This Trichormus variabilis (strain ATCC 29413 / PCC 7937) (Anabaena variabilis) protein is Sulfate adenylyltransferase.